Consider the following 257-residue polypeptide: UPF0246 protein RHOS4_29700 (257 aa).

This sequence belongs to the UPF0246 family.

The protein is UPF0246 protein RHOS4_29700 of Cereibacter sphaeroides (strain ATCC 17023 / DSM 158 / JCM 6121 / CCUG 31486 / LMG 2827 / NBRC 12203 / NCIMB 8253 / ATH 2.4.1.) (Rhodobacter sphaeroides).